The primary structure comprises 926 residues: Nitrate reductase [NADH] (926 aa).

Positions 1-85 (MAASVDRQYH…SDSEEDDDEN (85 aa)) are disordered. A compositionally biased stretch (polar residues) spans 36-46 (YTFSNPPSSNG). The segment covering 58 to 73 (DNNSNSNNGSNNNNNR) has biased composition (low complexity). Cysteine 204 provides a ligand contact to Mo-molybdopterin. Residues 551 to 626 (SKMYSMSEVK…LEDFRIGELI (76 aa)) form the Cytochrome b5 heme-binding domain. Histidine 586 and histidine 609 together coordinate heme. An FAD-binding FR-type domain is found at 670 to 782 (RVKIPCKLIE…KGPLGHIEYL (113 aa)). FAD is bound by residues 722–725 (RAYT), 739–743 (VVKVY), phenylalanine 744, phenylalanine 751, 756–758 (VMS), and threonine 809.

Belongs to the nitrate reductase family. In terms of assembly, homodimer. FAD is required as a cofactor. The cofactor is heme. It depends on Mo-molybdopterin as a cofactor.

The catalysed reaction is nitrite + NAD(+) + H2O = nitrate + NADH + H(+). Its function is as follows. Nitrate reductase is a key enzyme involved in the first step of nitrate assimilation in plants, fungi and bacteria. The polypeptide is Nitrate reductase [NADH] (NIA) (Spinacia oleracea (Spinach)).